Here is a 340-residue protein sequence, read N- to C-terminus: tRNA N6-adenosine threonylcarbamoyltransferase (340 aa).

Fe cation contacts are provided by His113 and His117. Substrate is bound by residues 135–139, Asp169, Gly182, Asp186, and Asn274; that span reads LVSGG. Asp302 provides a ligand contact to Fe cation.

This sequence belongs to the KAE1 / TsaD family. Requires Fe(2+) as cofactor.

It is found in the cytoplasm. It catalyses the reaction L-threonylcarbamoyladenylate + adenosine(37) in tRNA = N(6)-L-threonylcarbamoyladenosine(37) in tRNA + AMP + H(+). Its function is as follows. Required for the formation of a threonylcarbamoyl group on adenosine at position 37 (t(6)A37) in tRNAs that read codons beginning with adenine. Is involved in the transfer of the threonylcarbamoyl moiety of threonylcarbamoyl-AMP (TC-AMP) to the N6 group of A37, together with TsaE and TsaB. TsaD likely plays a direct catalytic role in this reaction. The chain is tRNA N6-adenosine threonylcarbamoyltransferase from Mycolicibacterium smegmatis (strain ATCC 700084 / mc(2)155) (Mycobacterium smegmatis).